Here is a 585-residue protein sequence, read N- to C-terminus: Involucrin (585 aa).

The span at 1–15 (MSQQHTLPVTLSPAL) shows a compositional bias: polar residues. The interval 1-132 (MSQQHTLPVT…LEEEKKLLDQ (132 aa)) is disordered. The Omega-hydroxyceramide glutamate ester moiety is linked to residue Gln-79. A compositionally biased stretch (basic and acidic residues) spans 92 to 115 (WEQHEEYQKAENPEQQLKQEKTQR). Omega-hydroxyceramide glutamate ester attachment occurs at residues Gln-118 and Gln-133. The tract at residues 149–540 (KEQLLELPEQ…KDLEQQKGQL (392 aa)) is disordered. A run of 23 repeats spans residues 153 to 162 (LELPEQQEGH), 163 to 172 (LKHLEQQEGQ), 173 to 182 (LKHPEQQEGQ), 183 to 192 (LELPEQQEGQ), 193 to 202 (LELPEQQEGQ), 203 to 212 (LELPEQQEGQ), 213 to 222 (LELPEQQEGQ), 223 to 232 (LELPEQQEGQ), 233 to 242 (LELPQQQEGQ), 243 to 252 (LELSEQQEGQ), 253 to 262 (LELSEQQEGQ), 263 to 272 (LKHLEHQEGQ), 273 to 282 (LEVPEEQMGQ), 283 to 292 (LKYLEQQEGQ), 293 to 302 (LKHLDQQEKQ), 303 to 312 (PELPEQQMGQ), 313 to 322 (LKHLEQQEGQ), 323 to 332 (PKHLEQQEGQ), 333 to 342 (LEQLEEQEGQ), 343 to 352 (LKHLEQQEGQ), 353 to 362 (LEHLEHQEGQ), 363 to 372 (LGLPEQQVLQ), and 373 to 382 (LKQLEKQQGQ). The segment at 153–542 (LELPEQQEGH…LEQQKGQLEQ (390 aa)) is 39 X 10 AA approximate tandem repeats of [LP]-[EKG]-[LHVYQEK]-[PLSQE]-[EQDV]-[QHEKRGA]-Q-[EMVQLP]-[GKLE]-[QHVNLD]. A compositionally biased stretch (basic and acidic residues) spans 159–178 (QEGHLKHLEQQEGQLKHPEQ). The segment covering 179 to 261 (QEGQLELPEQ…QLELSEQQEG (83 aa)) has biased composition (low complexity). Residues 262–271 (QLKHLEHQEG) are compositionally biased toward basic and acidic residues. 3 stretches are compositionally biased toward basic and acidic residues: residues 292-304 (QLKHLDQQEKQPE), 314-328 (KHLEQQEGQPKHLEQ), and 341-360 (GQLKHLEQQEGQLEHLEHQE). Positions 361 to 383 (GQLGLPEQQVLQLKQLEKQQGQP) are enriched in low complexity. A 24; approximate repeat occupies 383-392 (PKHLEEEEGQ). A compositionally biased stretch (basic and acidic residues) spans 384 to 393 (KHLEEEEGQL). A run of 11 repeats spans residues 393–402 (LKHLVQQEGQ), 403–412 (LKHLVQQEGQ), 413–422 (LEQQERQVEH), 423–432 (LEQQVGQLKH), 433–442 (LEEQEGQLKH), 443–452 (LEQQQGQLEV), 453–462 (PEQQVGQPKN), 463–472 (LEQEEKQLEL), 473–482 (PEQQEGQVKH), 483–492 (LEKQEAQLEL), and 493–502 (PEQQVGQPKH). Basic and acidic residues-rich tracts occupy residues 415–424 (QQERQVEHLE) and 431–444 (KHLEEQEGQLKHLE). Over residues 445 to 462 (QQQGQLEVPEQQVGQPKN) the composition is skewed to low complexity. The segment covering 479 to 488 (QVKHLEKQEA) has biased composition (basic and acidic residues). Gln-496 participates in a covalent cross-link: Isoglutamyl lysine isopeptide (Gln-Lys) (interchain with K-? in other proteins). Basic and acidic residues predominate over residues 501–535 (KHLEQQEKHLEHPEQQDGQLKHLEQQEGQLKDLEQ). Residues 503 to 512 (LEQQEKHLEH) form a 36; approximate repeat. A run of 2 repeats spans residues 513-522 (PEQQDGQLKH) and 523-532 (LEQQEGQLKD). One copy of the 39; approximate repeat lies at 533 to 542 (LEQQKGQLEQ).

It belongs to the involucrin family. As to quaternary structure, directly or indirectly cross-linked to cornifelin (CNFN). Post-translationally, substrate of transglutaminase. Some glutamines and lysines are cross-linked to other involucrin molecules, to other proteins such as keratin, desmoplakin, periplakin and envoplakin, and to lipids like omega-hydroxyceramide. In terms of tissue distribution, keratinocytes of epidermis and other stratified squamous epithelia.

The protein localises to the cytoplasm. Part of the insoluble cornified cell envelope (CE) of stratified squamous epithelia. The polypeptide is Involucrin (IVL) (Homo sapiens (Human)).